An 88-amino-acid polypeptide reads, in one-letter code: MASSDKAFTLDIVTPQKLFFSGEINSVIAPGLNGLFQVLKGHAPLLAALKSGKVRLSLSDRSEDTFQIAGGFFEVSGNKAILLTEEVS.

It belongs to the ATPase epsilon chain family. F-type ATPases have 2 components, CF(1) - the catalytic core - and CF(0) - the membrane proton channel. CF(1) has five subunits: alpha(3), beta(3), gamma(1), delta(1), epsilon(1). CF(0) has three main subunits: a, b and c.

The protein resides in the cell inner membrane. Its function is as follows. Produces ATP from ADP in the presence of a proton gradient across the membrane. The protein is ATP synthase epsilon chain (atpC) of Chlorobaculum tepidum (strain ATCC 49652 / DSM 12025 / NBRC 103806 / TLS) (Chlorobium tepidum).